The sequence spans 2515 residues: Polyprotein P1234 (2515 aa).

An Alphavirus-like MT domain is found at 30–260 (VAQQATPNDH…EHRASLQSWH (231 aa)). A nsP1 membrane-binding region spans residues 245–264 (GSTLYPEHRASLQSWHLPSV). Residue cysteine 420 is the site of S-palmitoyl cysteine; by host attachment. One can recognise a (+)RNA virus helicase ATP-binding domain in the interval 695 to 850 (ELTNPPYHEL…RDICTKTFYK (156 aa)). 726-733 (GTPGSGKS) is a binding site for a ribonucleoside 5'-triphosphate. One can recognise a (+)RNA virus helicase C-terminal domain in the interval 851-999 (FISRRCTQPV…IEDWEAEHKG (149 aa)). The Peptidase C9 domain occupies 1012 to 1341 (NPFSCKTNVC…CVISSVYEGT (330 aa)). The interval 1013 to 1032 (PFSCKTNVCWAKALEPILAT) is nucleolus localization signal. The For cysteine protease nsP2 activity role is filled by cysteine 1021. The short motif at 1066–1075 (IKFFGMDLTS) is the Nuclear export signal element. Histidine 1098 functions as the For cysteine protease nsP2 activity in the catalytic mechanism. Residues 1196-1200 (PHKRI) carry the Nuclear localization signal motif. The Macro domain occupies 1348 to 1507 (APSYRTKREN…RIDAVLQLKE (160 aa)). The ADP-D-ribose site is built by asparagine 1371, glycine 1379, glycine 1459, isoleucine 1460, and tyrosine 1461. Residues cysteine 1610, cysteine 1612, cysteine 1635, and cysteine 1653 each contribute to the Zn(2+) site. Disordered regions lie at residues 1678–1705 (QPAAPPAQDEEAPEAVATPAPPAADNTS) and 1777–1797 (LAAASKTQEEPIPPASTSSAD). 2 consecutive short sequence motifs (FGDF; binding to host G3BP1) follow at residues 1839-1842 (FGSF) and 1862-1865 (FGSF). Positions 2269–2384 (DPVLETDIAS…HGVVSDKEMA (116 aa)) constitute a RdRp catalytic domain.

In terms of assembly, interacts with non-structural protein 3. Interacts with RNA-directed RNA polymerase nsP4. Interacts with protease nsP2. interacts with itself. As to quaternary structure, interacts with mRNA-capping enzyme nsP1. Interacts with host DDX1. Interacts with host DDX3. Interacts (via C-terminus) with host G3BP1; this interaction inhibits the formation of host stress granules on viral mRNAs and the nsp3-G3BP1 complexes bind viral RNAs and probably orchestrate the assembly of viral replication complexes. Interacts (via C-terminus) with host G3BP2; this interaction inhibits the formation of host stress granules on viral mRNAs and the nsp3-G3BP2 complexes bind viral RNAs and probably orchestrate the assembly of viral replication complexes. Interacts with mRNA-capping enzyme nsP1. Interacts with protease nsP2. interacts with itself. In terms of assembly, interacts with RNA-directed RNA polymerase nsP4. Interacts with mRNA-capping enzyme nsP1. Interacts with KPNA1/karyopherin-alpha1; this interaction probably allows the active transport of protease nsP2 into the host nucleus. It depends on Mg(2+) as a cofactor. Requires Mn(2+) as cofactor. Specific enzymatic cleavages in vivo yield mature proteins. The processing of the polyprotein is temporally regulated. In early stages (1.7 hpi), P1234 is first cleaved in trans through its nsP2 protease activity, releasing P123' and nsP4, which associate to form the early replication complex. At the same time, P1234 is also cut at the nsP1/nsP2 site early in infection but with lower efficiency. After replication of the viral minus-strand RNAs (4 hpi), the polyproteins are cut at the nsP1/nsP2 and nsP2/nsP3 sites very efficiently, preventing accumulation of P123' and P1234 and allowing the formation of the late replication complex. NsP3'/nsP4 site is not cleaved anymore and P34 is produced rather than nsP4. Post-translationally, specific enzymatic cleavages in vivo yield mature proteins. The processing of the polyprotein is temporally regulated. In early stages (1.7 hpi), P123 is cleaved at the nsP1/nsP2 site with low efficiency. After replication of the viral minus-strand RNAs (4 hpi), the polyproteins are cut at the nsP1/nsP2 and nsP2/nsP3 sites very efficiently, preventing accumulation of P123 and allowing the formation of the late replication complex. In terms of processing, specific enzymatic cleavages in vivo yield mature proteins. The processing of the polyprotein is temporally regulated. In early stages (1.7 hpi), P123' is cleaved at the nsP1/nsP2 site with low efficiency. After replication of the viral minus-strand RNAs (4 hpi), the polyproteins are cut at the nsP1/nsP2 and nsP2/nsP3 sites very efficiently, preventing accumulation of P123' and allowing the formation of the late replication complex. Palmitoylated by host palmitoyltransferases ZDHHC2 and ZDHHC19. Post-translationally, phosphorylated by host on serines and threonines. In terms of processing, ubiquitinated; targets the protein for rapid degradation via the ubiquitin system. Nsp4 is present in extremely low quantities due to low frequency of translation through the amber stop-codon and the degradation by the ubiquitin pathway.

The protein resides in the host cytoplasmic vesicle membrane. It is found in the host cell membrane. The protein localises to the host cell projection. It localises to the host filopodium. Its subcellular location is the host nucleus. The protein resides in the host cytoplasm. The catalysed reaction is GTP + S-adenosyl-L-methionine = N(7)-methyl-GTP + S-adenosyl-L-homocysteine. The enzyme catalyses N(7)-methyl-GTP + L-histidyl-[protein] = N(tele)-(N(7)-methylguanosine 5'-phospho)-L-histidyl-[protein] + diphosphate. It catalyses the reaction N(tele)-(N(7)-methylguanosine 5'-phospho)-L-histidyl-[protein] + a 5'-end diphospho-(purine-ribonucleoside) in mRNA + H(+) = a 5'-end (N(7)-methyl 5'-triphosphoguanosine)-(purine-ribonucleoside) in mRNA + L-histidyl-[protein]. It carries out the reaction a 5'-end triphospho-ribonucleoside in mRNA + H2O = a 5'-end diphospho-ribonucleoside in mRNA + phosphate + H(+). The catalysed reaction is a ribonucleoside 5'-triphosphate + H2O = a ribonucleoside 5'-diphosphate + phosphate + H(+). The enzyme catalyses ATP + H2O = ADP + phosphate + H(+). It catalyses the reaction RNA(n) + a ribonucleoside 5'-triphosphate = RNA(n+1) + diphosphate. It carries out the reaction RNA(n) + ATP = RNA(n)-3'-adenine ribonucleotide + diphosphate. The catalysed reaction is 4-O-(ADP-D-ribosyl)-L-aspartyl-[protein] + H2O = L-aspartyl-[protein] + ADP-D-ribose + H(+). The enzyme catalyses 5-O-(ADP-D-ribosyl)-L-glutamyl-[protein] + H2O = L-glutamyl-[protein] + ADP-D-ribose + H(+). It catalyses the reaction ADP-alpha-D-ribose 1''-phosphate + H2O = ADP-D-ribose + phosphate. In terms of biological role, inactive precursor of the viral replicase, which is activated by cleavages carried out by the viral protease nsP2. The early replication complex formed by the polyprotein P123 and nsP4 synthesizes minus-strand RNAs. As soon P123 is cleaved into mature proteins, the plus-strand RNAs synthesis begins. Its function is as follows. The early replication complex formed by the polyprotein P123' and nsP4 synthesizes minus-strand RNAs. Polyprotein P123' is a short-lived polyprotein that accumulates during early stage of infection. As soon P123' is cleaved into mature proteins, the plus-strand RNAs synthesis begins. Functionally, cytoplasmic capping enzyme that catalyzes two virus-specific reactions: methyltransferase and nsP1 guanylyltransferase. mRNA-capping is necessary since all viral RNAs are synthesized in the cytoplasm, and host capping enzymes are restricted to the nucleus. The enzymatic reaction involves a covalent link between 7-methyl-GMP and nsP1, whereas eukaryotic capping enzymes form a covalent complex only with GMP. nsP1 capping consists in the following reactions: GTP is first methylated into 7-methyl-GMP and then is covalently linked to nsP1 to form the m7GMp-nsP1 complex from which 7-methyl-GMP complex is transferred to the mRNA to create the cap structure. NsP1 is needed for the initiation of the minus-strand RNAs synthesis. Probably serves as a membrane anchor for the replication complex composed of nsP1-nsP4. Palmitoylated nsP1 is remodeling host cell cytoskeleton, and induces filopodium-like structure formation at the surface of the host cell. Interacts with host TMEM45B; this interaction leads to viral replication inhibition. In terms of biological role, multifunctional protein whose N-terminus is part of the RNA polymerase complex and displays NTPase, RNA triphosphatase and helicase activities. NTPase and RNA triphosphatase are involved in viral RNA capping and helicase keeps a check on the dsRNA replication intermediates. The C-terminus harbors a protease that specifically cleaves the polyproteins and releases the mature proteins. Required for the shutoff of minus-strand RNAs synthesis. Specifically inhibits the host IFN response by promoting the nuclear export of host STAT1. Also inhibits host transcription by inducing rapid proteasome-dependent degradation of POLR2A, a catalytic subunit of the RNAPII complex. The resulting inhibition of cellular protein synthesis serves to ensure maximal viral gene expression and to evade host immune response. Seems to be essential for minus-strand RNAs and subgenomic 26S mRNAs synthesis. Displays mono-ADP-ribosylhydrolase activity. ADP-ribosylation is a post-translational modification that controls various processes of the host cell and the virus probably needs to revert it for optimal viral replication. Binds proteins of FXR family and sequesters them into the viral RNA replication complexes thereby inhibiting the formation of host stress granules on viral mRNAs. The nsp3'-FXR complexes bind viral RNAs and probably orchestrate the assembly of viral replication complexes, thanks to the ability of FXR family members to self-assemble and bind DNA. Its function is as follows. Seems to be essential for minus-strand RNAs and subgenomic 26S mRNAs synthesis. Displays mono-ADP-ribosylhydrolase activity. ADP-ribosylation is a post-translantional modification that controls various processes of the host cell and the virus probably needs to revert it for optimal viral replication. Binds proteins of G3BP family and sequesters them into the viral RNA replication complexes thereby inhibiting the formation of host stress granules on viral mRNAs. The nsp3-G3BP complexes bind viral RNAs and probably orchestrate the assembly of viral replication complexes, thanks to the ability of G3BP family members to self-assemble and bind DNA. Functionally, RNA dependent RNA polymerase. Replicates genomic and antigenomic RNA by recognizing replications specific signals. The early replication complex formed by the polyprotein P123 and nsP4 synthesizes minus-strand RNAs. The late replication complex composed of fully processed nsP1-nsP4 is responsible for the production of genomic and subgenomic plus-strand RNAs. The core catalytic domain of nsP4 also possesses terminal adenylyltransferase (TATase) activity that is probably involved in maintenance and repair of the poly(A) tail, an element required for replication of the viral genome. Interacts with host TMEM45B; this interaction leads to viral replication inhibition. The protein is Polyprotein P1234 of Acrocephalus scirpaceus (Eurasian reed-warbler).